The primary structure comprises 500 residues: MLTGVLQDWVWEAGETANESCPVGSLRTASAVNSCHQGRIPLFTVGVESTKQVQEAVRFARKHNLRLVIRNTGHDLAGRSSAPDSFQIHTHHLQEIQFHADMRLDGSNTSLGPAVTVGAGVMMGNLYAQAARHGYMVLGGDCPTVGVVGGFLQGGGISDFLSLNQGFGVDNVLEYEVVTADGELVVANALQNQDLFWALRGGGGGTFGVVTRATMRVFPDVPVVISEILLEAPQAISSSWTQGLSIVLTALQSLNRDNVGGQLVIAVLPKLAVQASIKFFFLDATEATVIDRRMKPFLTKLSRANVKYTYSSKNLPHFSSNYRQVPDIHSDNDYGVLGSTVAISQQLFDSPQGPEKVATALANLPVSAGDLIFTSNLGGRVISNGELAETSMHPAWRSASQLINYVHTVEPSIEGRAKARERLTNTQMPMLYALDPNLKLSYRNVGDPNEKDFQQIYWGPNYGRLSNIKKKWDTDDLFFSKLGVGSERWDSEEQLCLLHA.

The FAD-binding PCMH-type domain maps to 37–220 (QGRIPLFTVG…TRATMRVFPD (184 aa)).

This sequence belongs to the oxygen-dependent FAD-linked oxidoreductase family. FAD serves as cofactor.

The protein operates within alkaloid biosynthesis; ergot alkaloid biosynthesis. Functionally, FAD-linked oxidoreductase; part of the gene cluster that mediates the biosynthesis of fungal ergot alkaloid. DmaW catalyzes the first step of ergot alkaloid biosynthesis by condensing dimethylallyl diphosphate (DMAP) and tryptophan to form 4-dimethylallyl-L-tryptophan. The second step is catalyzed by the methyltransferase easF that methylates 4-dimethylallyl-L-tryptophan in the presence of S-adenosyl-L-methionine, resulting in the formation of 4-dimethylallyl-L-abrine. The catalase easC and the FAD-dependent oxidoreductase easE then transform 4-dimethylallyl-L-abrine to chanoclavine-I which is further oxidized by easD in the presence of NAD(+), resulting in the formation of chanoclavine-I aldehyde. Chanoclavine-I aldehyde is the precursor of ergoamides and ergopeptines in Clavicipitaceae, and clavine-type alcaloids such as fumiclavine in Trichocomaceae. However, the metabolites downstream of chanoclavine-I aldehyde in Arthrodermataceae have not been identified yet. This is FAD-linked oxidoreductase easE from Arthroderma benhamiae (strain ATCC MYA-4681 / CBS 112371) (Trichophyton mentagrophytes).